The chain runs to 522 residues: Maturase K (522 aa).

Belongs to the intron maturase 2 family. MatK subfamily.

It is found in the plastid. Its subcellular location is the chloroplast. In terms of biological role, usually encoded in the trnK tRNA gene intron. Probably assists in splicing its own and other chloroplast group II introns. In Micranthus junceus (Micranthus plantagineus var. junceus), this protein is Maturase K.